Here is a 584-residue protein sequence, read N- to C-terminus: Isocitrate dehydrogenase kinase/phosphatase (584 aa).

ATP is bound by residues 315–321 (APGVKGM) and Lys336. Asp371 is a catalytic residue.

It belongs to the AceK family.

The protein localises to the cytoplasm. The catalysed reaction is L-seryl-[isocitrate dehydrogenase] + ATP = O-phospho-L-seryl-[isocitrate dehydrogenase] + ADP + H(+). Functionally, bifunctional enzyme which can phosphorylate or dephosphorylate isocitrate dehydrogenase (IDH) on a specific serine residue. This is a regulatory mechanism which enables bacteria to bypass the Krebs cycle via the glyoxylate shunt in response to the source of carbon. When bacteria are grown on glucose, IDH is fully active and unphosphorylated, but when grown on acetate or ethanol, the activity of IDH declines drastically concomitant with its phosphorylation. This is Isocitrate dehydrogenase kinase/phosphatase from Serratia proteamaculans (strain 568).